The primary structure comprises 52 residues: Insulin (52 aa).

Disulfide bonds link C7/C38, C19/C51, and C37/C42.

It belongs to the insulin family. In terms of assembly, heterodimer of a B chain and an A chain linked by two disulfide bonds.

It localises to the secreted. Insulin decreases blood glucose concentration. It increases cell permeability to monosaccharides, amino acids and fatty acids. It accelerates glycolysis, the pentose phosphate cycle, and glycogen synthesis in liver. This Polypterus senegalus (Senegal bichir) protein is Insulin (ins).